We begin with the raw amino-acid sequence, 165 residues long: Ribosome maturation factor RimM (165 aa).

In terms of domain architecture, PRC barrel spans 90–161 (EDEYFIVDLV…LITIRPSGEW (72 aa)).

This sequence belongs to the RimM family. As to quaternary structure, binds ribosomal protein uS19.

It is found in the cytoplasm. Functionally, an accessory protein needed during the final step in the assembly of 30S ribosomal subunit, possibly for assembly of the head region. Essential for efficient processing of 16S rRNA. May be needed both before and after RbfA during the maturation of 16S rRNA. It has affinity for free ribosomal 30S subunits but not for 70S ribosomes. The protein is Ribosome maturation factor RimM of Clostridium perfringens (strain SM101 / Type A).